A 98-amino-acid polypeptide reads, in one-letter code: Large ribosomal subunit protein uL23 (98 aa).

Belongs to the universal ribosomal protein uL23 family. Part of the 50S ribosomal subunit. Contacts protein L29, and trigger factor when it is bound to the ribosome.

Functionally, one of the early assembly proteins it binds 23S rRNA. One of the proteins that surrounds the polypeptide exit tunnel on the outside of the ribosome. Forms the main docking site for trigger factor binding to the ribosome. The chain is Large ribosomal subunit protein uL23 from Rickettsia akari (strain Hartford).